Consider the following 809-residue polypeptide: ATP-dependent zinc metalloprotease FTSH 3, mitochondrial (809 aa).

Residues 1–83 constitute a mitochondrion transit peptide; it reads MTMIFFSKLN…FANPRLRRFF (83 aa). Over residues 93 to 121 the composition is skewed to basic and acidic residues; sequence YENYFPKDKQEPKSDQKSEHKEGSEKNEN. The segment at 93–122 is disordered; sequence YENYFPKDKQEPKSDQKSEHKEGSEKNENE. The chain crosses the membrane as a helical span at residues 132–152; sequence FQNLLIPLLALAVFFSTFSFG. Residue 362–369 coordinates ATP; sequence GPPGTGKT. A Zn(2+)-binding site is contributed by His-586. Glu-587 is an active-site residue. His-590 and Asp-662 together coordinate Zn(2+). Residues 776-809 are disordered; sequence GFEETEKDSAATPTVEPVVDDGAPPPFEPQVVPT.

The protein in the N-terminal section; belongs to the AAA ATPase family. It in the C-terminal section; belongs to the peptidase M41 family. Zn(2+) serves as cofactor.

It localises to the mitochondrion inner membrane. Functionally, probable ATP-dependent zinc metallopeptidase. Involved in the assembly and/or stability of the complexes I and V of the mitochondrial oxidative phosphorylation system. This is ATP-dependent zinc metalloprotease FTSH 3, mitochondrial (FTSH3) from Arabidopsis thaliana (Mouse-ear cress).